Here is a 112-residue protein sequence, read N- to C-terminus: Nitrogen regulatory protein P-II (112 aa).

At S49 the chain carries Phosphoserine. The residue at position 51 (Y51) is an O-UMP-tyrosine.

It belongs to the P(II) protein family. Homotrimer. In terms of processing, phosphorylation dependent on the nitrogen source and spectral light quality.

Its function is as follows. P-II indirectly controls the transcription of the GS gene (glnA). P-II prevents NR-II-catalyzed conversion of NR-I to NR-I-phosphate, the transcriptional activator of glnA. When P-II is phosphorylated, these events are reversed. In nitrogen-limiting conditions, when the ratio of Gln to 2-ketoglutarate decreases, P-II is phosphorylated which allows the deadenylation of glutamine synthetase (GS), thus activating the enzyme. This chain is Nitrogen regulatory protein P-II (glnB), found in Synechococcus elongatus (strain ATCC 33912 / PCC 7942 / FACHB-805) (Anacystis nidulans R2).